Consider the following 419-residue polypeptide: GTPase Obg (419 aa).

The Obg domain occupies 1 to 158 (MFVDQARIFV…KWIRLELKLL (158 aa)). The 169-residue stretch at 159 to 327 (ADVGLVGFPN…LMGKTYALLQ (169 aa)) folds into the OBG-type G domain. Residues 165 to 172 (GFPNAGKS), 190 to 194 (FTTLV), 212 to 215 (DIPG), 282 to 285 (NKMD), and 308 to 310 (SAV) contribute to the GTP site. Mg(2+) contacts are provided by Ser172 and Thr192. One can recognise an OCT domain in the interval 342–419 (RRFEEELPFK…IKDFEFEFTE (78 aa)).

This sequence belongs to the TRAFAC class OBG-HflX-like GTPase superfamily. OBG GTPase family. In terms of assembly, monomer. Requires Mg(2+) as cofactor.

It localises to the cytoplasm. An essential GTPase which binds GTP, GDP and possibly (p)ppGpp with moderate affinity, with high nucleotide exchange rates and a fairly low GTP hydrolysis rate. Plays a role in control of the cell cycle, stress response, ribosome biogenesis and in those bacteria that undergo differentiation, in morphogenesis control. This is GTPase Obg from Syntrophomonas wolfei subsp. wolfei (strain DSM 2245B / Goettingen).